The primary structure comprises 425 residues: Pleckstrin homology domain-containing family A member 2 (425 aa).

Residues 7–113 form the PH 1 domain; sequence QNRICGFLDI…WVEALNQASK (107 aa). Residue Lys141 forms a Glycyl lysine isopeptide (Lys-Gly) (interchain with G-Cter in SUMO2) linkage. Ser184 is modified (phosphoserine). The region spanning 198–298 is the PH 2 domain; that stretch reads PLIKSGYCVK…WIEGIGAAVQ (101 aa). Over residues 310–331 the composition is skewed to polar residues; that stretch reads SRSISLTRPGSSTLTSAPNSIL. Residues 310-425 form a disordered region; the sequence is SRSISLTRPG…DDENIRTSDV (116 aa). Ser314 and Ser349 each carry phosphoserine. 2 stretches are compositionally biased toward basic and acidic residues: residues 363 to 375 and 400 to 410; these read AEEKPLSVEHAPE and RSEPQHPKEKP.

In terms of assembly, binds MPDZ and PTPN13.

It localises to the cytoplasm. It is found in the cell membrane. Its subcellular location is the nucleus. Binds specifically to phosphatidylinositol 3,4-diphosphate (PtdIns3,4P2), but not to other phosphoinositides. May recruit other proteins to the plasma membrane. In Mus musculus (Mouse), this protein is Pleckstrin homology domain-containing family A member 2 (Plekha2).